The following is a 420-amino-acid chain: Gamma-glutamyl phosphate reductase 2 (420 aa).

This sequence belongs to the gamma-glutamyl phosphate reductase family.

The protein localises to the cytoplasm. It catalyses the reaction L-glutamate 5-semialdehyde + phosphate + NADP(+) = L-glutamyl 5-phosphate + NADPH + H(+). The protein operates within amino-acid biosynthesis; L-proline biosynthesis; L-glutamate 5-semialdehyde from L-glutamate: step 2/2. Its function is as follows. Catalyzes the NADPH-dependent reduction of L-glutamate 5-phosphate into L-glutamate 5-semialdehyde and phosphate. The product spontaneously undergoes cyclization to form 1-pyrroline-5-carboxylate. This Synechocystis sp. (strain ATCC 27184 / PCC 6803 / Kazusa) protein is Gamma-glutamyl phosphate reductase 2.